The chain runs to 83 residues: UPF0512 protein G (83 aa).

The protein belongs to the UPF0512 family.

This Dictyostelium discoideum (Social amoeba) protein is UPF0512 protein G.